Consider the following 282-residue polypeptide: MTPLIAVLFAILQGATELFPVSSLGHVVIVPALLHWPIDQASPSFLPFVVMLHVGTATALLLYFWREWWAMLAGLLGRGEPGEVDAQRGLLLRLVVATLPAVLIGFALKKPIQHLFASPEIAAAFLIANGAVLIIGERLRRRRAGNGFGIGQLTLRDSLVIGLFQCLAFLPGLSRSGSAIVGGLTRGLDHEAAARFAFLMATPVIAGAAVIEVPHLLHHAAAARGMFGTALLAAVVAGVVAYLSTAFLMRYFRNHDRWALGPFAAYCALFGALSLILIPFGA.

Transmembrane regions (helical) follow at residues 7 to 29 (VLFA…HVVI), 45 to 65 (FLPF…LYFW), 89 to 109 (GLLL…FALK), 115 to 135 (LFAS…VLII), 153 to 173 (LTLR…LPGL), 196 to 216 (FAFL…VPHL), 229 to 249 (TALL…AFLM), and 258 to 278 (WALG…LILI).

This sequence belongs to the UppP family.

The protein localises to the cell inner membrane. It carries out the reaction di-trans,octa-cis-undecaprenyl diphosphate + H2O = di-trans,octa-cis-undecaprenyl phosphate + phosphate + H(+). Catalyzes the dephosphorylation of undecaprenyl diphosphate (UPP). Confers resistance to bacitracin. In Acidiphilium cryptum (strain JF-5), this protein is Undecaprenyl-diphosphatase.